The sequence spans 483 residues: Betaine aldehyde dehydrogenase (483 aa).

K(+)-binding residues include Ile27 and Asp93. Position 149-151 (149-151 (GAW)) interacts with NAD(+). The active-site Charge relay system is Lys161. 175-178 (KPSE) lines the NAD(+) pocket. Val179 serves as a coordination point for K(+). 228–231 (SVPT) is an NAD(+) binding site. Val243 lines the K(+) pocket. The active-site Proton acceptor is Glu249. NAD(+) contacts are provided by Gly251, Cys283, and Glu380. Residue Cys283 is the Nucleophile of the active site. Residue Cys283 is modified to Cysteine sulfenic acid (-SOH). K(+) contacts are provided by Lys450 and Gly453. Glu457 (charge relay system) is an active-site residue.

This sequence belongs to the aldehyde dehydrogenase family. As to quaternary structure, dimer of dimers. Requires K(+) as cofactor.

It carries out the reaction betaine aldehyde + NAD(+) + H2O = glycine betaine + NADH + 2 H(+). It participates in amine and polyamine biosynthesis; betaine biosynthesis via choline pathway; betaine from betaine aldehyde: step 1/1. Functionally, involved in the biosynthesis of the osmoprotectant glycine betaine. Catalyzes the irreversible oxidation of betaine aldehyde to the corresponding acid. This Cereibacter sphaeroides (strain ATCC 17025 / ATH 2.4.3) (Rhodobacter sphaeroides) protein is Betaine aldehyde dehydrogenase.